A 213-amino-acid chain; its full sequence is 3,4-dihydroxy-2-butanone 4-phosphate synthase (213 aa).

D-ribulose 5-phosphate contacts are provided by residues 27-28 (RE), Asp32, 140-144 (RTGHT), and Glu164. Position 28 (Glu28) interacts with Mg(2+). Mg(2+) is bound at residue His143.

It belongs to the DHBP synthase family. Homodimer. Mg(2+) serves as cofactor. Mn(2+) is required as a cofactor.

It carries out the reaction D-ribulose 5-phosphate = (2S)-2-hydroxy-3-oxobutyl phosphate + formate + H(+). It functions in the pathway cofactor biosynthesis; riboflavin biosynthesis; 2-hydroxy-3-oxobutyl phosphate from D-ribulose 5-phosphate: step 1/1. Its function is as follows. Catalyzes the conversion of D-ribulose 5-phosphate to formate and 3,4-dihydroxy-2-butanone 4-phosphate. This Agrobacterium fabrum (strain C58 / ATCC 33970) (Agrobacterium tumefaciens (strain C58)) protein is 3,4-dihydroxy-2-butanone 4-phosphate synthase.